We begin with the raw amino-acid sequence, 444 residues long: Homocysteine/cysteine synthase (444 aa).

The residue at position 208 (lysine 208) is an N6-(pyridoxal phosphate)lysine.

Belongs to the trans-sulfuration enzymes family. As to quaternary structure, homotetramer. The cofactor is pyridoxal 5'-phosphate.

Its subcellular location is the cytoplasm. It carries out the reaction O-acetyl-L-homoserine + methanethiol = L-methionine + acetate + H(+). It catalyses the reaction O-acetyl-L-homoserine + hydrogen sulfide = L-homocysteine + acetate. The catalysed reaction is O-acetyl-L-serine + hydrogen sulfide = L-cysteine + acetate. It participates in amino-acid biosynthesis; L-methionine biosynthesis via de novo pathway; L-homocysteine from O-acetyl-L-homoserine. The protein operates within amino-acid biosynthesis; L-cysteine biosynthesis; L-cysteine from L-serine: step 2/2. Catalyzes the conversion of O-acetyl-L-homoserine (OAH) into homocysteine in the methionine biosynthesis pathway. Also catalyzes the conversion of O-acetylserine (OAS) into cysteine, the last step in the cysteine biosynthesis pathway. The chain is Homocysteine/cysteine synthase (MET17) from Kluyveromyces lactis (strain ATCC 8585 / CBS 2359 / DSM 70799 / NBRC 1267 / NRRL Y-1140 / WM37) (Yeast).